The following is a 440-amino-acid chain: Xylose isomerase (440 aa).

Active-site residues include histidine 101 and aspartate 104. Glutamate 232, glutamate 268, histidine 271, aspartate 296, aspartate 307, aspartate 309, and aspartate 339 together coordinate Mg(2+).

This sequence belongs to the xylose isomerase family. Homotetramer. Mg(2+) is required as a cofactor.

The protein localises to the cytoplasm. It carries out the reaction alpha-D-xylose = alpha-D-xylulofuranose. The polypeptide is Xylose isomerase (Salmonella agona (strain SL483)).